The sequence spans 277 residues: MADDLGNEWWEEPAGDASNSEPAEEVKESEESKGNKKKKIPSGKTQVKRKKEVKVSQEAEKEDSAPKKKRRKKKTISDVLAQHAPTAGTPEDMQKLVLEHFENKRSVIELEELQIPDTCFVKENDLTHTLSSYLKEICPKWSKLSKNHKEKKSVLLLVVCSSAHRTLELIKLINAFKADTKVMKLFAKHIKIKDQINLLEKNVTHIGIGTPGRIKALIDQDGLSLESMKYLVFDWNWRDQKLRRMMDIPEVKKETLELLDSGLIRASRAGTLKIGLF.

Acidic residues predominate over residues Met-1 to Ala-14. Positions Met-1–Glu-91 are disordered. Positions Glu-24 to Gly-34 are enriched in basic and acidic residues. Over residues Asn-35 to Glu-52 the composition is skewed to basic residues. Basic and acidic residues predominate over residues Val-53–Pro-66.

It belongs to the CMS1 family.

The polypeptide is Protein CMSS1 (cmss1) (Xenopus laevis (African clawed frog)).